Here is a 385-residue protein sequence, read N- to C-terminus: Spermidine/putrescine import ATP-binding protein PotA (385 aa).

An ABC transporter domain is found at 6-238 (IEFKNVSKVF…PINHFVATFI (233 aa)). 40–47 (GSSGSGKS) contacts ATP.

It belongs to the ABC transporter superfamily. Spermidine/putrescine importer (TC 3.A.1.11.1) family. As to quaternary structure, the complex is composed of two ATP-binding proteins (PotA), two transmembrane proteins (PotB and PotC) and a solute-binding protein (PotD).

Its subcellular location is the cell membrane. It catalyses the reaction ATP + H2O + polyamine-[polyamine-binding protein]Side 1 = ADP + phosphate + polyamineSide 2 + [polyamine-binding protein]Side 1.. In terms of biological role, part of the ABC transporter complex PotABCD involved in spermidine/putrescine import. Responsible for energy coupling to the transport system. This Streptococcus sanguinis (strain SK36) protein is Spermidine/putrescine import ATP-binding protein PotA.